Reading from the N-terminus, the 266-residue chain is MSRIARRFEALRAAGRKALIPYVTAGDPNPDNTVPLMHAMVAAGADIIELGVPFSDPMADGPVIQQACERALRHHVSLRQVIGMVKTFREQDAETPVVLMGYLNPVEIMGYEAFAIAAASAGVDGLLTVDLPPEESHDLVQVLRSHGVDPIFLLAPTSHEARIKRICDAASGFVYYVSLKGVTGAATLDVDAVAEKLAAIRAHTDLPLGVGFGIRDADSAARVSRVADAVVVGSALVNRIAEHEQDPEAGRRVVSELLAEMRKAMD.

Residues E49 and D60 each act as proton acceptor in the active site.

Belongs to the TrpA family. In terms of assembly, tetramer of two alpha and two beta chains.

It catalyses the reaction (1S,2R)-1-C-(indol-3-yl)glycerol 3-phosphate + L-serine = D-glyceraldehyde 3-phosphate + L-tryptophan + H2O. It functions in the pathway amino-acid biosynthesis; L-tryptophan biosynthesis; L-tryptophan from chorismate: step 5/5. Its function is as follows. The alpha subunit is responsible for the aldol cleavage of indoleglycerol phosphate to indole and glyceraldehyde 3-phosphate. The chain is Tryptophan synthase alpha chain from Thioalkalivibrio sulfidiphilus (strain HL-EbGR7).